Consider the following 153-residue polypeptide: Superoxide dismutase [Cu-Zn] (153 aa).

Cu cation is bound by residues histidine 45, histidine 47, and histidine 62. Cysteine 56 and cysteine 145 form a disulfide bridge. The Zn(2+) site is built by histidine 62, histidine 70, histidine 79, and aspartate 82. Histidine 119 lines the Cu cation pocket.

It belongs to the Cu-Zn superoxide dismutase family. Homodimer. Requires Cu cation as cofactor. Zn(2+) serves as cofactor.

The protein resides in the cytoplasm. It catalyses the reaction 2 superoxide + 2 H(+) = H2O2 + O2. Its function is as follows. Destroys radicals which are normally produced within the cells and which are toxic to biological systems. The chain is Superoxide dismutase [Cu-Zn] from Drosophila teissieri (Fruit fly).